The sequence spans 55 residues: Omega-ctenitoxin-Pr2a (55 aa).

5 disulfide bridges follow: C2-C16, C9-C22, C15-C37, C24-C35, and C45-C52.

In terms of tissue distribution, expressed by the venom gland.

It localises to the secreted. Its function is as follows. Antagonist of L-type calcium channels (Cav1/CACNA1). In vivo, causes paralysis in posterior limbs, and gradual decrease in movement and aggression during 24 hours after intracerebroventricular injection in mice at dose levels of 3 ug per mouse. The polypeptide is Omega-ctenitoxin-Pr2a (Phoneutria reidyi (Brazilian Amazonian armed spider)).